The chain runs to 92 residues: RNA-binding protein Hfq (92 aa).

The 60-residue stretch at 9-68 (DPFLNALRRERVPVSIYLVNGIKLQGQVESFDQFVILLKNTVSQMVYKHAISTVVPARPF) folds into the Sm domain. Positions 68–92 (FNVSSHHNTPNQAAGYNASHDDSAE) are disordered. A compositionally biased stretch (polar residues) spans 69–81 (NVSSHHNTPNQAA).

The protein belongs to the Hfq family. As to quaternary structure, homohexamer.

RNA chaperone that binds small regulatory RNA (sRNAs) and mRNAs to facilitate mRNA translational regulation in response to envelope stress, environmental stress and changes in metabolite concentrations. Also binds with high specificity to tRNAs. This chain is RNA-binding protein Hfq, found in Shewanella loihica (strain ATCC BAA-1088 / PV-4).